The primary structure comprises 369 residues: MNRQDIGFVQSSINYQFKNLQLLEQAFTRKSYSEEHPELQNNEVLEFYGDEILDFFVTKMMYKRFSRILNNELVSEKNEGELTKLKSILVSKESLARCMYNIGFSKFLYLGKSDEKNEVYKSKSVNEDLFEAIIGAVAADCDWNYEKLEKVCRTMLDMETTNGYLALLVKEKSHRLGFGEPCYRPFAWQTDNPEDWQSDNLFNMGIGFGGFGSTSKNPKTGKHEYGIQVGENKFTGIGDGIAQAKLNAEQKAYHFLIQEEIKQQFQNLDYTNPASTLHELFQKKVIMEVRYEFNEYHDENGNPIWNCKAILEGYGTFEADNASKKQVKQDASLKLLKFIAKTKIEQTEKWEIPTFYHGMARIWHDEGKI.

The RNase III domain maps to 6–142; the sequence is IGFVQSSINY…IIGAVAADCD (137 aa). Glu46 serves as a coordination point for Mg(2+). Residue Asp50 is part of the active site. Mg(2+)-binding residues include Asp128 and Glu131. Residue Glu131 is part of the active site. Residues 272–341 form the DRBM domain; it reads NPASTLHELF…SLKLLKFIAK (70 aa).

The protein belongs to the ribonuclease III family. As to quaternary structure, homodimer. Mg(2+) serves as cofactor.

The protein localises to the cytoplasm. It catalyses the reaction Endonucleolytic cleavage to 5'-phosphomonoester.. Digests double-stranded RNA. Involved in the processing of primary rRNA transcript to yield the immediate precursors to the large and small rRNAs (23S and 16S). Processes some mRNAs, and tRNAs when they are encoded in the rRNA operon. Processes pre-crRNA and tracrRNA of type II CRISPR loci if present in the organism. The protein is Ribonuclease 3 (rnc) of Treponema succinifaciens (strain ATCC 33096 / DSM 2489 / 6091).